A 625-amino-acid polypeptide reads, in one-letter code: Acetolactate synthase (625 aa).

Positions 1–29 (MSAPTKPHARPQGAGNSVPNTVKPATQFP) are disordered. A compositionally biased stretch (polar residues) spans 14–29 (AGNSVPNTVKPATQFP). Glutamate 92 contributes to the thiamine diphosphate binding site. Residues arginine 194, 300–321 (HGTV…LGTR), and 343–362 (DIDP…IVGD) each bind FAD. The segment at 436–516 (QHQMWAAQFI…IKVALINNGN (81 aa)) is thiamine pyrophosphate binding. Mg(2+) is bound by residues aspartate 487 and asparagine 514.

Belongs to the TPP enzyme family. Mg(2+) serves as cofactor. Thiamine diphosphate is required as a cofactor.

It carries out the reaction 2 pyruvate + H(+) = (2S)-2-acetolactate + CO2. It participates in amino-acid biosynthesis; L-isoleucine biosynthesis; L-isoleucine from 2-oxobutanoate: step 1/4. It functions in the pathway amino-acid biosynthesis; L-valine biosynthesis; L-valine from pyruvate: step 1/4. The polypeptide is Acetolactate synthase (ilvB) (Mycobacterium leprae (strain TN)).